The primary structure comprises 106 residues: Cytochrome c oxidase assembly protein COX16 homolog, mitochondrial (106 aa).

Topologically, residues Met-1–Thr-15 are mitochondrial matrix. The chain crosses the membrane as a helical span at residues Leu-16–Leu-33. The Mitochondrial intermembrane segment spans residues Arg-34 to Thr-106. The disordered stretch occupies residues Ile-81–Thr-106.

This sequence belongs to the COX16 family. As to quaternary structure, associates with the MITRAC complex. Interacts with MT-CO2/COX; specifically interacts with newly synthesized MT-CO2/COX. Interacts with SCO1, SCO2 and COA6.

It localises to the mitochondrion inner membrane. Functionally, required for the assembly of the mitochondrial respiratory chain complex IV (CIV), also known as cytochrome c oxidase. Promotes the insertion of copper into the active site of cytochrome c oxidase subunit II (MT-CO2/COX2). Interacts specifically with newly synthesized MT-CO2/COX and its copper center-forming metallochaperones SCO1, SCO2 and COA6. Probably facilitates MT-CO2/COX2 association with the MITRAC assembly intermediate containing MT-CO1/COX1, thereby participating in merging the MT-CO1/COX1 and MT-CO2/COX2 assembly lines. This Mus musculus (Mouse) protein is Cytochrome c oxidase assembly protein COX16 homolog, mitochondrial.